The chain runs to 623 residues: Heterogeneous nuclear ribonucleoprotein Q (623 aa).

The residue at position 2 (A2) is an N-acetylalanine. S159 bears the Phosphoserine mark. 3 RRM domains span residues 162 to 241 (TEIF…ISVA), 243 to 325 (NRLF…WADP), and 338 to 408 (KVLF…FAKP). K168 participates in a covalent cross-link: Glycyl lysine isopeptide (Lys-Gly) (interchain with G-Cter in SUMO2). N6-acetyllysine is present on K221. Position 363 is an N6-acetyllysine (K363). At Y373 the chain carries Phosphotyrosine. The interaction with APOBEC1 stretch occupies residues 400 to 561 (NIEIVFAKPP…GARGGRGGNV (162 aa)). At R444 the chain carries Asymmetric dimethylarginine; by PRMT1; alternate. R444 is modified (omega-N-methylarginine; by PRMT1; alternate). 6 tandem repeats follow at residues 448-450 (RGG), 451-453 (RGG), 460-464 (YYGYE), 469-472 (YYGY), 478-480 (RGG), and 485-488 (YYGY). The segment at 448 to 559 (RGGRGGYGYP…VRGARGGRGG (112 aa)) is 8 X 3 AA repeats of R-G-G. The tract at residues 460–488 (YYGYEDYYDYYGYDYHNYRGGYEDPYYGY) is 3 X 4 AA repeats of Y-Y-G-Y. R496 carries the post-translational modification Omega-N-methylarginine; by PRMT1. Residues 497–623 (GRGGRGARGA…YQDTFGQQWK (127 aa)) form a disordered region. Residues 498–500 (RGG) form a 1-4 repeat. Residues 504–522 (RGAAPSRGRGAAPPRGRAG) are compositionally biased toward low complexity. R510 carries the asymmetric dimethylarginine; by PRMT1 modification. An Asymmetric dimethylarginine; by PRMT1; alternate modification is found at R518. Position 518 is an omega-N-methylarginine; by PRMT1; alternate (R518). The segment at 518–549 (RGRAGYSQRGGPGSARGVRGARGGAQQQRGRG) is interaction with SMN. R526 carries the post-translational modification Asymmetric dimethylarginine; alternate. Residue R526 is modified to Omega-N-methylarginine; alternate. One copy of the 1-5 repeat lies at 526-528 (RGG). Asymmetric dimethylarginine; by PRMT1; alternate is present on residues R536 and R539. Residues R536 and R539 each carry the omega-N-methylarginine; by PRMT1; alternate modification. Tandem repeats lie at residues 539-541 (RGG), 554-556 (RGG), and 557-559 (RGG). Positions 550–562 (VRGARGGRGGNVG) are enriched in gly residues. A Bipartite nuclear localization signal motif is present at residues 564–578 (KRKADGYNQPDTKRR). Positions 580–595 (TNNQNWGSQPIAQQPL) are enriched in polar residues. Phosphoserine is present on S587. Residue K607 forms a Glycyl lysine isopeptide (Lys-Gly) (interchain with G-Cter in SUMO2) linkage. The span at 611-623 (QEFYQDTFGQQWK) shows a compositional bias: polar residues.

As to quaternary structure, identified in the spliceosome C complex. Component of the coding region determinant (CRD)-mediated complex, composed of DHX9, HNRNPU, IGF2BP1, SYNCRIP and YBX1. Identified in a mRNP complex, at least composed of DHX9, DDX3X, ELAVL1, HNRNPU, IGF2BP1, ILF3, PABPC1, PCBP2, PTBP2, STAU1, STAU2, SYNCRIP and YBX1. Identified in a mRNP granule complex, at least composed of ACTB, ACTN4, DHX9, ERG, HNRNPA1, HNRNPA2B1, HNRNPAB, HNRNPD, HNRNPL, HNRNPR, HNRNPU, HSPA1, HSPA8, IGF2BP1, ILF2, ILF3, NCBP1, NCL, PABPC1, PABPC4, PABPN1, RPLP0, RPS3, RPS3A, RPS4X, RPS8, RPS9, SYNCRIP, YBX1 and untranslated mRNAs. Interacts with GTPBP1. Isoform 1 is a component of the APOB mRNA editosome complex. Isoform 1 interacts with APOBEC1 and A1CF. Part of a complex associated with the FOS mCRD domain and consisting of PABPC1, PAIP1, CSDE1/UNR, HNRPD and SYNCRIP. Isoform 2 interacts with HNRPR. Interacts with POLR2A hyperphosphorylated C-terminal domain. Interacts with HABP4. Identified in a histone pre-mRNA complex, at least composed of ERI1, LSM11, SLBP, SNRPB, SYNCRIP and YBX1. Isoform 1 and isoform 2 interact with SMN. Isoform 2 interacts through its C-terminal domain with SYT7, SYT8 and SYT9. The non-phosphorylated and phosphorylated forms are colocalized with PAIP1 in polysomes. In terms of processing, phosphorylated on tyrosine. The membrane-bound form found in microsomes is phosphorylated in vitro by insulin receptor tyrosine kinase (INSR). Phosphorylation is inhibited upon binding to RNA, whereas the cytoplasmic form is poorly phosphorylated. Ubiquitous. Detected in heart, brain, spleen, lung, liver, skeletal muscle, adipocytes, kidney and testis.

The protein localises to the nucleus. It localises to the nucleoplasm. It is found in the microsome. The protein resides in the cytoplasm. Its function is as follows. Heterogeneous nuclear ribonucleoprotein (hnRNP) implicated in mRNA processing mechanisms. Component of the CRD-mediated complex that promotes MYC mRNA stability. Isoform 1 and isoform 2 are associated in vitro with pre-mRNA, splicing intermediates and mature mRNA protein complexes. Isoform 1 binds to apoB mRNA AU-rich sequences. Isoform 1 is part of the APOB mRNA editosome complex and may modulate the postranscriptional C to U RNA-editing of the APOB mRNA through either by binding to A1CF (APOBEC1 complementation factor), to APOBEC1 or to RNA itself. May be involved in translationally coupled mRNA turnover. Implicated with other RNA-binding proteins in the cytoplasmic deadenylation/translational and decay interplay of the FOS mRNA mediated by the major coding-region determinant of instability (mCRD) domain. Interacts in vitro preferentially with poly(A) and poly(U) RNA sequences. Isoform 2 may be involved in cytoplasmic vesicle-based mRNA transport through interaction with synaptotagmins. The chain is Heterogeneous nuclear ribonucleoprotein Q (Syncrip) from Mus musculus (Mouse).